Reading from the N-terminus, the 510-residue chain is Alpha-L-arabinofuranosidase B (510 aa).

Residues 1–24 (MTMSRSSRSSVLALALATGSLVAA) form the signal peptide. Residues 25-342 (GPCDIYSSGG…ADIVAAKYAT (318 aa)) form a catalytic region. 3 disulfides stabilise this stretch: Cys27-Cys37, Cys87-Cys92, and Cys182-Cys183. Asn89 carries an N-linked (GlcNAc...) asparagine glycan. Asp225 serves as a coordination point for substrate. Glu227 functions as the Nucleophile in the catalytic mechanism. The substrate site is built by Asn228 and Gly303. Asp304 functions as the Proton donor in the catalytic mechanism. The ABD stretch occupies residues 343–510 (TSLISGPALT…VSWVVADGFA (168 aa)). A disulfide bridge connects residues Cys412 and Cys450. 8 residues coordinate substrate: His427, Asn429, Phe430, Asp446, His475, Glu477, Leu480, and Asp500.

Belongs to the glycosyl hydrolase 54 family.

It localises to the secreted. It carries out the reaction Hydrolysis of terminal non-reducing alpha-L-arabinofuranoside residues in alpha-L-arabinosides.. Its pathway is glycan metabolism; L-arabinan degradation. Its function is as follows. Alpha-L-arabinofuranosidase involved in the degradation of arabinoxylan, a major component of plant hemicellulose. Able to hydrolyze 1,5-, 1,3- and 1,2-alpha-linkages not only in L-arabinofuranosyl oligosaccharides, but also in polysaccharides containing terminal non-reducing L-arabinofuranoses in side chains, like L-arabinan, arabinogalactan and arabinoxylan. The polypeptide is Alpha-L-arabinofuranosidase B (abfB) (Emericella nidulans (strain FGSC A4 / ATCC 38163 / CBS 112.46 / NRRL 194 / M139) (Aspergillus nidulans)).